The primary structure comprises 432 residues: Putative D-alanyl-D-alanine carboxypeptidase (432 aa).

The helical; Signal-anchor transmembrane segment at 7-25 (ATVLLTFSLSAFAVEYPVL) threads the bilayer.

This sequence belongs to the peptidase S12 family. YfeW subfamily.

It localises to the cell inner membrane. The enzyme catalyses Preferential cleavage: (Ac)2-L-Lys-D-Ala-|-D-Ala. Also transpeptidation of peptidyl-alanyl moieties that are N-acyl substituents of D-alanine.. This is Putative D-alanyl-D-alanine carboxypeptidase from Salmonella paratyphi A (strain ATCC 9150 / SARB42).